The chain runs to 528 residues: Major facilitator superfamily multidrug transporter mdr3 (528 aa).

Residues 1 to 37 form a disordered region; it reads MLAMAASAEETNRQSNAGRRSVISPSEAPPEAEQSDV. Transmembrane regions (helical) follow at residues 50–70, 91–111, 119–139, 149–169, 180–200, 211–231, and 241–261; these read FILILCSTQLFVQGAFGYILI, WHVGGYSLTVGTFILIAGKLG, ILVLGWAWFGVWSVIGGCSAF, ARALQGIGPALLLPNALAIAG, MIFSAFAVAAPLGCFTAGVVG, WVMWTYSIGCFIIAAVGLWVI, and AATLQFDYIGSVLGVAGLLLL. Asparagine 262 carries an N-linked (GlcNAc...) asparagine glycan. 5 helical membrane passes run 272 to 292, 340 to 360, 375 to 395, 410 to 430, and 448 to 468; these read GWSTPYVYVLLIGGFLVLGLF, VITSGWLMAIACAAFLGGCIL, FWSFVIMAWGMDISFPASTTI, SLVNTVINYSIAIGLGIAGTV, and ALWSSVGLAALAFGIALVFAV.

It belongs to the major facilitator superfamily.

It localises to the cell membrane. Major facilitator superfamily transporter that confers resistance to azoles such as itraconazole. This Aspergillus fumigatus (strain ATCC MYA-4609 / CBS 101355 / FGSC A1100 / Af293) (Neosartorya fumigata) protein is Major facilitator superfamily multidrug transporter mdr3.